Here is a 122-residue protein sequence, read N- to C-terminus: Phosphoribosyl-ATP pyrophosphatase (122 aa).

The protein belongs to the PRA-PH family.

It localises to the cytoplasm. The catalysed reaction is 1-(5-phospho-beta-D-ribosyl)-ATP + H2O = 1-(5-phospho-beta-D-ribosyl)-5'-AMP + diphosphate + H(+). The protein operates within amino-acid biosynthesis; L-histidine biosynthesis; L-histidine from 5-phospho-alpha-D-ribose 1-diphosphate: step 2/9. The protein is Phosphoribosyl-ATP pyrophosphatase of Cupriavidus metallidurans (strain ATCC 43123 / DSM 2839 / NBRC 102507 / CH34) (Ralstonia metallidurans).